The sequence spans 134 residues: MLSPKRTRFRKQHRGRMKGISYRGNHISFGKYALQALEPAWITSRQIEAGRRAMTRNARRGGKIWVRIFPDKPVTLRPAETRMGSGKGSPEYWVAVVKPGRILYEMGGVTENIARRAISLAASKMPIRTQFIIS.

Belongs to the universal ribosomal protein uL16 family. Part of the 50S ribosomal subunit.

It is found in the plastid. It localises to the chloroplast. The chain is Large ribosomal subunit protein uL16c from Atropa belladonna (Belladonna).